A 193-amino-acid polypeptide reads, in one-letter code: 7-methyl-GTP pyrophosphatase (193 aa).

The active-site Proton acceptor is the Asp-68.

It belongs to the Maf family. YceF subfamily. A divalent metal cation serves as cofactor.

The protein resides in the cytoplasm. The enzyme catalyses N(7)-methyl-GTP + H2O = N(7)-methyl-GMP + diphosphate + H(+). In terms of biological role, nucleoside triphosphate pyrophosphatase that hydrolyzes 7-methyl-GTP (m(7)GTP). May have a dual role in cell division arrest and in preventing the incorporation of modified nucleotides into cellular nucleic acids. The chain is 7-methyl-GTP pyrophosphatase from Chromobacterium violaceum (strain ATCC 12472 / DSM 30191 / JCM 1249 / CCUG 213 / NBRC 12614 / NCIMB 9131 / NCTC 9757 / MK).